Reading from the N-terminus, the 101-residue chain is Small ribosomal subunit protein uS10 (101 aa).

Belongs to the universal ribosomal protein uS10 family. As to quaternary structure, part of the 30S ribosomal subunit.

Functionally, involved in the binding of tRNA to the ribosomes. In Christiangramia forsetii (strain DSM 17595 / CGMCC 1.15422 / KT0803) (Gramella forsetii), this protein is Small ribosomal subunit protein uS10.